The following is a 154-amino-acid chain: Myoglobin (154 aa).

Positions 2 to 148 (GLSDEEWKKV…FRNDMASRYK (147 aa)) constitute a Globin domain. Nitrite is bound at residue His65. His65 contacts O2. His94 serves as a coordination point for heme b.

The protein belongs to the globin family. In terms of assembly, monomeric.

Its subcellular location is the cytoplasm. It localises to the sarcoplasm. It catalyses the reaction Fe(III)-heme b-[protein] + nitric oxide + H2O = Fe(II)-heme b-[protein] + nitrite + 2 H(+). The enzyme catalyses H2O2 + AH2 = A + 2 H2O. In terms of biological role, monomeric heme protein which primary function is to store oxygen and facilitate its diffusion within muscle tissues. Reversibly binds oxygen through a pentacoordinated heme iron and enables its timely and efficient release as needed during periods of heightened demand. Depending on the oxidative conditions of tissues and cells, and in addition to its ability to bind oxygen, it also has a nitrite reductase activity whereby it regulates the production of bioactive nitric oxide. Under stress conditions, like hypoxia and anoxia, it also protects cells against reactive oxygen species thanks to its pseudoperoxidase activity. The polypeptide is Myoglobin (MB) (Varanus varius (Lace monitor lizard)).